The primary structure comprises 325 residues: Elongation factor P--(R)-beta-lysine ligase (325 aa).

76–78 serves as a coordination point for substrate; the sequence is SPE. ATP-binding positions include 100–102 and Asn109; that span reads RNE. Tyr118 serves as a coordination point for substrate. 244–245 lines the ATP pocket; the sequence is EL. Residue Glu251 coordinates substrate. Gly300 is a binding site for ATP.

It belongs to the class-II aminoacyl-tRNA synthetase family. EpmA subfamily. In terms of assembly, homodimer.

It carries out the reaction D-beta-lysine + L-lysyl-[protein] + ATP = N(6)-((3R)-3,6-diaminohexanoyl)-L-lysyl-[protein] + AMP + diphosphate + H(+). Functionally, with EpmB is involved in the beta-lysylation step of the post-translational modification of translation elongation factor P (EF-P) on 'Lys-34'. Catalyzes the ATP-dependent activation of (R)-beta-lysine produced by EpmB, forming a lysyl-adenylate, from which the beta-lysyl moiety is then transferred to the epsilon-amino group of EF-P 'Lys-34'. This is Elongation factor P--(R)-beta-lysine ligase from Escherichia fergusonii (strain ATCC 35469 / DSM 13698 / CCUG 18766 / IAM 14443 / JCM 21226 / LMG 7866 / NBRC 102419 / NCTC 12128 / CDC 0568-73).